Here is a 722-residue protein sequence, read N- to C-terminus: Bifunctional UDP-N-acetylglucosamine 2-epimerase/N-acetylmannosamine kinase (722 aa).

The UDP site is built by Arg19, Ser23, Arg113, His220, and Asn253. CMP-N-acetyl-beta-neuraminate contacts are provided by Lys259, Glu271, Lys280, and His281. Residues Val282, Ser301, Ser302, Glu307, and Arg321 each contribute to the UDP site. The N-acetylmannosamine kinase stretch occupies residues 406–722 (TLSALAVDLG…VLDYTTRRIH (317 aa)). Asp413 serves as a coordination point for Mg(2+). An an N-acyl-D-mannosamine 6-phosphate-binding site is contributed by Gly416. Residues Thr417, Asn418, and Arg420 each contribute to the ADP site. Gly476, Arg477, Thr489, Asn516, Asp517, and Gly545 together coordinate an N-acyl-D-mannosamine 6-phosphate. An N-acyl-D-mannosamine contacts are provided by Gly476, Arg477, Thr489, Asn516, and Asp517. Asp517 is a catalytic residue. An N-acyl-D-mannosamine is bound by residues Glu566 and His569. Position 569 (His569) interacts with an N-acyl-D-mannosamine 6-phosphate. The Zn(2+) site is built by His569, Cys579, Cys581, and Cys586. Residue Glu588 coordinates an N-acyl-D-mannosamine 6-phosphate. Glu588 is an an N-acyl-D-mannosamine binding site.

The protein in the N-terminal section; belongs to the UDP-N-acetylglucosamine 2-epimerase family. This sequence in the C-terminal section; belongs to the ROK (NagC/XylR) family. As to quaternary structure, homodimer. Homotetramer. Homohexamer. The hexameric form exhibits both enzyme activities, whereas the dimeric form only catalyzes the phosphorylation of N-acyl-D-mannosamine. In terms of processing, phosphorylated. Phosphorylation by PKC activates the UDP-N-acetylglucosamine 2-epimerase activity.

It is found in the cytoplasm. The protein resides in the cytosol. It catalyses the reaction UDP-N-acetyl-alpha-D-glucosamine + H2O = aldehydo-N-acetyl-D-mannosamine + UDP + H(+). The catalysed reaction is an N-acyl-D-mannosamine + ATP = an N-acyl-D-mannosamine 6-phosphate + ADP + H(+). It participates in amino-sugar metabolism; N-acetylneuraminate biosynthesis. Its activity is regulated as follows. The UDP-N-acetylglucosamine 2-epimerase activity, in contrast to the N-acetylmannosamine kinase activity, exhibits allosteric regulation by cytidine monophosphate-N-acetylneuraminic acid (CMP-Neu5Ac), the end product of neuraminic acid biosynthesis. Moreover, the activity is contingent upon the oligomeric state of the enzyme. The monomeric form is inactive, while the dimeric form selectively catalyzes the phosphorylation of N-acetylmannosamine. The hexameric form, on the other hand, demonstrates full proficiency in both enzyme activities. Furthermore, the UDP-N-acetylglucosamine 2-epimerase activity is increased by PKC-mediated phosphorylation. In terms of biological role, bifunctional enzyme that possesses both UDP-N-acetylglucosamine 2-epimerase and N-acetylmannosamine kinase activities, and serves as the initiator of the biosynthetic pathway leading to the production of N-acetylneuraminic acid (NeuAc), a critical precursor in the synthesis of sialic acids. By catalyzing this pivotal and rate-limiting step in sialic acid biosynthesis, this enzyme assumes a pivotal role in governing the regulation of cell surface sialylation, playing a role in embryonic angiogenesis. Sialic acids represent a category of negatively charged sugars that reside on the surface of cells as terminal components of glycoconjugates and mediate important functions in various cellular processes, including cell adhesion, signal transduction, and cellular recognition. In Cricetulus griseus (Chinese hamster), this protein is Bifunctional UDP-N-acetylglucosamine 2-epimerase/N-acetylmannosamine kinase (GNE).